A 171-amino-acid polypeptide reads, in one-letter code: Vimentin-type intermediate filament-associated coiled-coil protein (171 aa).

Residues leucine 7–glutamine 98 adopt a coiled-coil conformation. The segment at glutamate 126–valine 171 is disordered.

As to expression, expressed in brain, heart, kidney, liver, lung, skeletal muscle, spleen and testis. Within the kidney expression is pronounced within glomeruli.

Its subcellular location is the cytoplasm. This is Vimentin-type intermediate filament-associated coiled-coil protein (Vmac) from Rattus norvegicus (Rat).